The chain runs to 261 residues: Undecaprenyl-diphosphatase (261 aa).

6 helical membrane-spanning segments follow: residues 39 to 59 (NVLL…LIIF), 76 to 96 (LLII…KDFF), 99 to 119 (LFVS…ILWL), 173 to 193 (AAKF…VLDL), 206 to 226 (IDLM…YFAV), and 238 to 258 (LTWF…LQAA).

The protein belongs to the UppP family.

The protein resides in the cell membrane. The catalysed reaction is di-trans,octa-cis-undecaprenyl diphosphate + H2O = di-trans,octa-cis-undecaprenyl phosphate + phosphate + H(+). Catalyzes the dephosphorylation of undecaprenyl diphosphate (UPP). Confers resistance to bacitracin. The protein is Undecaprenyl-diphosphatase of Carboxydothermus hydrogenoformans (strain ATCC BAA-161 / DSM 6008 / Z-2901).